Here is a 220-residue protein sequence, read N- to C-terminus: UPF0502 protein CV_4303 (220 aa).

The protein belongs to the UPF0502 family.

This is UPF0502 protein CV_4303 from Chromobacterium violaceum (strain ATCC 12472 / DSM 30191 / JCM 1249 / CCUG 213 / NBRC 12614 / NCIMB 9131 / NCTC 9757 / MK).